The chain runs to 407 residues: Peptidase T (407 aa).

H82 serves as a coordination point for Zn(2+). D84 is a catalytic residue. D143 contacts Zn(2+). Catalysis depends on E177, which acts as the Proton acceptor. Zn(2+) contacts are provided by E178, D200, and H382.

The protein belongs to the peptidase M20B family. Requires Zn(2+) as cofactor.

The protein localises to the cytoplasm. The enzyme catalyses Release of the N-terminal residue from a tripeptide.. Functionally, cleaves the N-terminal amino acid of tripeptides. The polypeptide is Peptidase T (Streptococcus pyogenes serotype M3 (strain ATCC BAA-595 / MGAS315)).